Reading from the N-terminus, the 437-residue chain is GTPase Obg (437 aa).

The Obg domain maps to 2 to 160 (SMFLDTAKIS…RQLELELKIL (159 aa)). The region spanning 161-338 (ADVGLVGFPS…LLEATAELLA (178 aa)) is the OBG-type G domain. GTP contacts are provided by residues 167–174 (GFPSVGKS), 192–196 (FTTIV), 214–217 (DLPG), 284–287 (NKMD), and 319–321 (SSL). Mg(2+)-binding residues include serine 174 and threonine 194. The OCT domain maps to 359-437 (GFAKTEKDFE…IGKFEFEFVD (79 aa)).

Belongs to the TRAFAC class OBG-HflX-like GTPase superfamily. OBG GTPase family. In terms of assembly, monomer. The cofactor is Mg(2+).

Its subcellular location is the cytoplasm. Functionally, an essential GTPase which binds GTP, GDP and possibly (p)ppGpp with moderate affinity, with high nucleotide exchange rates and a fairly low GTP hydrolysis rate. Plays a role in control of the cell cycle, stress response, ribosome biogenesis and in those bacteria that undergo differentiation, in morphogenesis control. The chain is GTPase Obg from Streptococcus pyogenes serotype M2 (strain MGAS10270).